The primary structure comprises 154 residues: Transcriptional repressor NrdR (154 aa).

The segment at Cys-3–Cys-34 is a zinc-finger region. An ATP-cone domain is found at Leu-49–Arg-139.

It belongs to the NrdR family. Requires Zn(2+) as cofactor.

In terms of biological role, negatively regulates transcription of bacterial ribonucleotide reductase nrd genes and operons by binding to NrdR-boxes. The chain is Transcriptional repressor NrdR from Desulfitobacterium hafniense (strain DSM 10664 / DCB-2).